Here is a 96-residue protein sequence, read N- to C-terminus: Conantokin Rl-B (96 aa).

The N-terminal stretch at 1-21 (MQLYTYLYLLVPLVTFHLILG) is a signal peptide. Residues 22–78 (TGTLDHGDALTERRSTDATALKPEPVLLQKSSARSTNDNGKDTQMKRILKKRGNKAR) constitute a propeptide that is removed on maturation. The interval 51-96 (KSSARSTNDNGKDTQMKRILKKRGNKARGEEELAEKAPEFARELAN) is disordered. The segment covering 77-96 (ARGEEELAEKAPEFARELAN) has biased composition (basic and acidic residues). Glu-81 provides a ligand contact to a divalent metal cation. 4-carboxyglutamate occurs at positions 81, 82, and 85. Glu-85 lines the a divalent metal cation pocket. At Pro-88 the chain carries 4-hydroxyproline. Positions 89 and 93 each coordinate a divalent metal cation. A 4-carboxyglutamate mark is found at Glu-89 and Glu-93. Asn-96 is modified (asparagine amide).

The protein belongs to the conotoxin B superfamily. Ca(2+) serves as cofactor. Mg(2+) is required as a cofactor. In terms of processing, hydroxylation of Pro-88 is important for NR2B/GRIN2B NMDA receptor selectivity. Removal of hydroxylation does not change global NMDA receptor antagonism (tested on WT neurons), but it decreases the inhibitory potency on NR2B/GRIN2B NMDA receptors and increases the inhibitory potency on NR2A/GRIN2A NMDA receptors. Hydroxylation of Pro-88 locally disrupts a small region of the divalent cation-induced alpha-helix but does not destabilize the entire helix. As to expression, expressed by the venom duct.

It localises to the secreted. Functionally, conantokins inhibit N-methyl-D-aspartate (NMDA) receptors. This toxin has antagonist activity on the NR2B/GRIN2B subunit (IC(50)=0.1 uM). In vivo, when delivered into the brain, is active has anticonvulsant activity in the model of epilepsy in mice. The protein is Conantokin Rl-B of Conus rolani (Cone snail).